The following is a 166-amino-acid chain: V-type proton ATPase subunit c4 (166 aa).

Over 1–13 the chain is Lumenal; it reads MASSGFSGDETAP. Residues 14-34 form a helical membrane-spanning segment; the sequence is FFGFLGAAAALVFSCMGAAYG. Residues 35–56 lie on the Cytoplasmic side of the membrane; sequence TAKSGVGVASMGVMRPELVMKS. Residues 57–77 traverse the membrane as a helical segment; the sequence is IVPVVMAGVLGIYGLIIAVII. The Lumenal portion of the chain corresponds to 78–96; that stretch reads STGINPKAKSYYLFDGYAH. A helical membrane pass occupies residues 97–118; it reads LSSGLACGLAGLSAGMAIGIVG. At 119 to 130 the chain is on the cytoplasmic side; sequence DAGVRANAQQPK. A helical membrane pass occupies residues 131–156; that stretch reads LFVGMILILIFAEALALYGLIVGIIL. Residues 157 to 166 are Lumenal-facing; it reads SSRAGQSRAE.

It belongs to the V-ATPase proteolipid subunit family. V-ATPase is a heteromultimeric enzyme composed of a peripheral catalytic V1 complex (components A to H) attached to an integral membrane V0 proton pore complex (components: a, c, c'', d and e). The proteolipid components c and c'' are present as a hexameric ring that forms the proton-conducting pore. Interacts with APD2.

It localises to the vacuole membrane. Proton-conducting pore forming subunit of the membrane integral V0 complex of vacuolar ATPase. V-ATPase is responsible for acidifying a variety of intracellular compartments in eukaryotic cells. In Arabidopsis thaliana (Mouse-ear cress), this protein is V-type proton ATPase subunit c4 (VHA-c4).